Here is a 455-residue protein sequence, read N- to C-terminus: Neuronal acetylcholine receptor subunit beta-3 (455 aa).

A signal peptide spans 1–20 (MLCLMLCVLCWSRSDVAALG). The Extracellular portion of the chain corresponds to 21–229 (SVVENEDALL…VTYSFVLRRL (209 aa)). N-linked (GlcNAc...) asparagine glycans are attached at residues asparagine 48 and asparagine 163. A disulfide bridge links cysteine 150 with cysteine 164. 3 consecutive transmembrane segments (helical) span residues 230–254 (PLFY…VFYL), 262–279 (LSLS…LLVI), and 296–317 (YLLF…VINV). At 318-425 (HHRSSATYHP…WKFVAQVLDR (108 aa)) the chain is on the cytoplasmic side. Residues 426–444 (IFLWLFLVVSVTGSVLIFT) traverse the membrane as a helical segment.

It belongs to the ligand-gated ion channel (TC 1.A.9) family. Acetylcholine receptor (TC 1.A.9.1) subfamily. Beta-3/CHRNB3 sub-subfamily. In terms of assembly, neuronal AChR seems to be composed of two different type of subunits: alpha and beta. CHRNB3/beta-3 subunit is only able to form functional nAChRs when co-assembled with another beta subunit. Participates in pentameric assemblies along with CHRNA4/alpha-4 and CHRNB2/beta-2 subunits and with CHRNA6/alpha-6 as well, forming stoichiometries such as (CHRNA3:CHRNB4)2:CHRNB3, (CHRNA4:CHRNB2)2:CHRNB3 or (CHRNA6:CHRNB2)2:CHRNB3. In terms of tissue distribution, relatively abundant in the developing retina and in the trigeminal ganglion.

It localises to the synaptic cell membrane. The protein localises to the cell membrane. The catalysed reaction is Ca(2+)(in) = Ca(2+)(out). It catalyses the reaction K(+)(in) = K(+)(out). It carries out the reaction Na(+)(in) = Na(+)(out). Activated by a myriad of ligands such as acetylcholine, cytisine, nicotine, choline and epibatidine. In terms of biological role, component of neuronal acetylcholine receptors (nAChRs) that function as pentameric, ligand-gated cation channels with high calcium permeability among other activities. nAChRs are excitatory neurotrasnmitter receptors formed by a collection of nAChR subunits known to mediate synaptic transmission in the nervous system and the neuromuscular junction. Each nAchR subunit confers differential attributes to channel properties, including activation, deactivation and desensitization kinetics, pH sensitivity, cation permeability, and binding to allosteric modulators. Has an accessory rather than functional role and is only able to form functional nAChRs when co-assembled with another beta subunit. Participates in pentameric assemblies along with CHRNA3, CHRNA4, CHRNA6, CHRNB2 and CHRNB4. Modulates receptor assembly and increases receptor sensitivity to nicotine when associated with CHRNB2, CHRNA4 and/or CHRNA6 as well as CHRNA3 and CHRNB4. Seems to play a role in nicotine addiction. The chain is Neuronal acetylcholine receptor subunit beta-3 (CHRNB3) from Gallus gallus (Chicken).